Reading from the N-terminus, the 20-residue chain is Fibrinogen (20 aa).

Positions 1 to 20 (LHSNLEYQYRYSGRVASGIP) constitute a Vitellogenin domain.

Secreted into the hemolymph.

It localises to the secreted. The protein localises to the extracellular space. Functionally, involved in lipid transport. Plays a role in hemolymph clotting. May be involved in wound healing in the cuticle. In Pacifastacus leniusculus (Signal crayfish), this protein is Fibrinogen.